A 383-amino-acid polypeptide reads, in one-letter code: MRIGVGVSTAPDVRRAAAEAAAHAREELAGGTPALAVLLGSRSHTDQAVDLLAAVQASVEPAALIGCVAQGIVAGRHELENEPAVAVWLASGPPAETFHLDFVRTGSGALITGYRFDRTAHDLHLLLPDPYSFPSNLLIEHLNTDLPGTTVVGGVVSGGRRRGDTRLFRDRDVLTSGLVGVRLPGAHSVSVVSQGCRPIGEPYIVTGADGAVITELGGRPPLHRLREIVLGMAPDEQELVSRGLQIGIVVDEHLAVPGQGDFLIRGLLGADPTTGAIGIGEVVEVGATVQFQVRDAAAADKDLRLAVERAAAELPGPPVGGLLFTCNGRGRRMFGVTDHDASTIEDLLGGIPLAGFFAAGEIGPVAGHNALHGFTASMALFVD.

A run of 2 helical transmembrane segments spans residues V49–A69 and L347–G367.

The protein to M.tuberculosis Rv0874c.

The protein localises to the cell membrane. This is an uncharacterized protein from Mycobacterium tuberculosis (strain CDC 1551 / Oshkosh).